The primary structure comprises 382 residues: Queuine tRNA-ribosyltransferase (382 aa).

D93 (proton acceptor) is an active-site residue. Substrate is bound by residues D93–F97, D147, Q191, and G218. Residues G249–D255 are RNA binding. The active-site Nucleophile is D268. The segment at T273 to R277 is RNA binding; important for wobble base 34 recognition. Positions 306, 308, 311, and 337 each coordinate Zn(2+).

This sequence belongs to the queuine tRNA-ribosyltransferase family. In terms of assembly, homodimer. Within each dimer, one monomer is responsible for RNA recognition and catalysis, while the other monomer binds to the replacement base PreQ1. Zn(2+) is required as a cofactor.

It catalyses the reaction 7-aminomethyl-7-carbaguanine + guanosine(34) in tRNA = 7-aminomethyl-7-carbaguanosine(34) in tRNA + guanine. Its pathway is tRNA modification; tRNA-queuosine biosynthesis. Functionally, catalyzes the base-exchange of a guanine (G) residue with the queuine precursor 7-aminomethyl-7-deazaguanine (PreQ1) at position 34 (anticodon wobble position) in tRNAs with GU(N) anticodons (tRNA-Asp, -Asn, -His and -Tyr). Catalysis occurs through a double-displacement mechanism. The nucleophile active site attacks the C1' of nucleotide 34 to detach the guanine base from the RNA, forming a covalent enzyme-RNA intermediate. The proton acceptor active site deprotonates the incoming PreQ1, allowing a nucleophilic attack on the C1' of the ribose to form the product. After dissociation, two additional enzymatic reactions on the tRNA convert PreQ1 to queuine (Q), resulting in the hypermodified nucleoside queuosine (7-(((4,5-cis-dihydroxy-2-cyclopenten-1-yl)amino)methyl)-7-deazaguanosine). This chain is Queuine tRNA-ribosyltransferase, found in Actinobacillus pleuropneumoniae serotype 5b (strain L20).